Here is a 350-residue protein sequence, read N- to C-terminus: Dihydroorotase (350 aa).

2 residues coordinate Zn(2+): His13 and His15. Substrate contacts are provided by residues 15–17 (HLR) and Asn41. Zn(2+) is bound by residues Lys99, His136, and His174. Lys99 is subject to N6-carboxylysine. Position 136 (His136) interacts with substrate. Residue Leu219 coordinates substrate. Position 247 (Asp247) interacts with Zn(2+). Asp247 is an active-site residue. Residues His251 and Ala263 each contribute to the substrate site.

The protein belongs to the metallo-dependent hydrolases superfamily. DHOase family. Class II DHOase subfamily. In terms of assembly, homodimer. It depends on Zn(2+) as a cofactor.

It carries out the reaction (S)-dihydroorotate + H2O = N-carbamoyl-L-aspartate + H(+). It functions in the pathway pyrimidine metabolism; UMP biosynthesis via de novo pathway; (S)-dihydroorotate from bicarbonate: step 3/3. Functionally, catalyzes the reversible cyclization of carbamoyl aspartate to dihydroorotate. In Allorhizobium ampelinum (strain ATCC BAA-846 / DSM 112012 / S4) (Agrobacterium vitis (strain S4)), this protein is Dihydroorotase.